We begin with the raw amino-acid sequence, 2488 residues long: PKS-NRPS hybrid synthetase swnK (2488 aa).

Residues Phe33–Arg422 are adenylation (A) domain. The Carrier 1 domain maps to Gln523–Gly598. The residue at position 558 (Ser558) is an O-(pantetheine 4'-phosphoryl)serine. The Ketosynthase family 3 (KS3) domain occupies His616–Glu1039. Catalysis depends on for beta-ketoacyl synthase activity residues Cys785, His920, and His960. The segment at Leu1149–Val1471 is malonyl-CoA:ACP transacylase (MAT) domain. The segment at Gly1723–Ala1901 is ketoreductase (KR) domain. The Carrier 2 domain maps to Ser2002–Leu2077. Ser2037 is subject to O-(pantetheine 4'-phosphoryl)serine. Residues Ser2084–Ala2103 are disordered. Residues Val2136–Thr2364 are thioester reductase (TE) domain.

In the N-terminal section; belongs to the NRP synthetase family.

The enzyme catalyses L-pipecolate + malonyl-CoA + 2 NADPH + 4 H(+) = (8aS)-octahydroindolizin-1-one + CO2 + 2 NADP(+) + CoA + 2 H2O. It carries out the reaction L-pipecolate + malonyl-CoA + 3 NADPH + 5 H(+) = (1R,8aS)-octahydroindolizin-1-ol + CO2 + 3 NADP(+) + CoA + 2 H2O. The catalysed reaction is L-pipecolate + malonyl-CoA + 3 NADPH + 5 H(+) = (1S,8aS)-octahydroindolizin-1-ol + CO2 + 3 NADP(+) + CoA + 2 H2O. Its pathway is mycotoxin biosynthesis. Its function is as follows. PKS-NRPS hybrid synthetase; part of the gene cluster that mediates the biosynthesis of swainsonine (SW), a cytotoxic fungal alkaloid and a potential cancer therapy drug. Swainsonine production occurs via a multibranched pathway and is dispensable for fungal colonization of plants and infection of insect hosts. The first step of swainsonine biosynthesis is the production of the precursor pipecolic acid (PA) via conversion of L-lysine (Lys) to 1-piperideine-6-carboxylate (P6C) by the aminotransferase swnA, the latter being further reduced to PA by the reductase swnR. PA can be converted from lysine by both the SW biosynthetic cluster and the unclustered genes such as lysine cyclodeaminase. The PKS-NRPS hybrid synthetase swnK uptakes and condensates PA and malonyl-CoA with and without skipping of the ketoreductase (KR) domain in order to produce 3 intermediates, 1-oxoindolizidine, (1S)-1-hydroxyindolizin, and (1R)-1-hydroxyindolizine; with the transisomer (1S)-1-hydroxyindolizin being predominant. The terminal thioester reductase (TE) domain of swnK is involved in reduction of the thioester bond to release the intermediate aldehydes. The oxidoreductase swnN could contribute to the reduction of 1-oxoindolizidine to (1S)-1-hydroxyindolizin and (1R)-1-hydroxyindolizine, contributing to the major route of SW production. The dioxygenase swnH2 would be responsible for the oxidization of (1R)-1-hydroxyindolizine into (1R,2S)-1,2-dihydroxyindolizine and of (1S)-1-hydroxyindolizin to yield both (1R,2S)-1,2-dihydroxyindolizine and (1S,2S)-1,2-dihydroxyindolizine. The dioxygenase swnH1 then performs the conversion of the 1,2-dihydroxyindolizine epimers to SW. In Metarhizium robertsii (strain ARSEF 23 / ATCC MYA-3075) (Metarhizium anisopliae (strain ARSEF 23)), this protein is PKS-NRPS hybrid synthetase swnK.